We begin with the raw amino-acid sequence, 262 residues long: ATP synthase subunit a (262 aa).

5 helical membrane passes run asparagine 25–phenylalanine 45, valine 86–isoleucine 106, aspartate 130–valine 150, leucine 204–leucine 226, and leucine 240–alanine 260.

The protein belongs to the ATPase A chain family. In terms of assembly, F-type ATPases have 2 components, CF(1) - the catalytic core - and CF(0) - the membrane proton channel. CF(1) has five subunits: alpha(3), beta(3), gamma(1), delta(1), epsilon(1). CF(0) has three main subunits: a(1), b(2) and c(9-12). The alpha and beta chains form an alternating ring which encloses part of the gamma chain. CF(1) is attached to CF(0) by a central stalk formed by the gamma and epsilon chains, while a peripheral stalk is formed by the delta and b chains.

The protein localises to the cell inner membrane. Its function is as follows. Key component of the proton channel; it plays a direct role in the translocation of protons across the membrane. The polypeptide is ATP synthase subunit a (Mannheimia succiniciproducens (strain KCTC 0769BP / MBEL55E)).